The following is a 365-amino-acid chain: Phosphoserine aminotransferase (365 aa).

Residue Arg-40 coordinates L-glutamate. Pyridoxal 5'-phosphate is bound by residues 74–75 (AS), Phe-99, Thr-155, Asp-177, and Gln-200. The residue at position 201 (Lys-201) is an N6-(pyridoxal phosphate)lysine. A pyridoxal 5'-phosphate-binding site is contributed by 241-242 (NT).

Belongs to the class-V pyridoxal-phosphate-dependent aminotransferase family. SerC subfamily. Homodimer. Requires pyridoxal 5'-phosphate as cofactor.

Its subcellular location is the cytoplasm. The catalysed reaction is O-phospho-L-serine + 2-oxoglutarate = 3-phosphooxypyruvate + L-glutamate. It catalyses the reaction 4-(phosphooxy)-L-threonine + 2-oxoglutarate = (R)-3-hydroxy-2-oxo-4-phosphooxybutanoate + L-glutamate. It participates in amino-acid biosynthesis; L-serine biosynthesis; L-serine from 3-phospho-D-glycerate: step 2/3. In terms of biological role, catalyzes the reversible conversion of 3-phosphohydroxypyruvate to phosphoserine and of 3-hydroxy-2-oxo-4-phosphonooxybutanoate to phosphohydroxythreonine. The chain is Phosphoserine aminotransferase from Lactococcus lactis subsp. cremoris (strain SK11).